The chain runs to 445 residues: MSERKYFGTDGIRGKVGDSPITPDFVLKLGWAAGKVLARHGSRKIIIGKDTRISGYMLESALEAGLAAAGLSASFTGPMPTPAVAYLTRTFRAEAGIVISASHNPYYDNGIKFFSIDGTKLPDEVEEAIEAEMEKPITCVESAELGRANRIVDAAGRYIEFCKGTFPNENNLNGLKVVVDCAHGATYHIAPNVFRELGAEVITIGCEPTGININDECGATDVRMLQKRVLEEGADVGLAFDGDGDRIIMVDHKGLKVDGDQILYIIAREALRQGQLRGGAVGTLMSNMGLEIALKQLGIPFVRAKVGDRYVLEKLQEKGWRLGAENSGHIILLDKTTTGDGIVAGLQVLSAMVRNHMSLHDLCSGMKLLPQILVNVRFTGNHDPLQSTEVQQVAKEVEAELGGKGRVLLRKSGTEPLIRVMVEGENEEQVTAMANRIADAVKHVG.

The active-site Phosphoserine intermediate is the serine 102. Residues serine 102, aspartate 241, aspartate 243, and aspartate 245 each contribute to the Mg(2+) site. At serine 102 the chain carries Phosphoserine.

Belongs to the phosphohexose mutase family. The cofactor is Mg(2+). In terms of processing, activated by phosphorylation.

It carries out the reaction alpha-D-glucosamine 1-phosphate = D-glucosamine 6-phosphate. Its function is as follows. Catalyzes the conversion of glucosamine-6-phosphate to glucosamine-1-phosphate. The protein is Phosphoglucosamine mutase of Proteus mirabilis (strain HI4320).